The chain runs to 477 residues: Glycogen synthase (477 aa).

Lysine 15 provides a ligand contact to ADP-alpha-D-glucose.

This sequence belongs to the glycosyltransferase 1 family. Bacterial/plant glycogen synthase subfamily.

The catalysed reaction is [(1-&gt;4)-alpha-D-glucosyl](n) + ADP-alpha-D-glucose = [(1-&gt;4)-alpha-D-glucosyl](n+1) + ADP + H(+). Its pathway is glycan biosynthesis; glycogen biosynthesis. Its function is as follows. Synthesizes alpha-1,4-glucan chains using ADP-glucose. In Salmonella typhi, this protein is Glycogen synthase.